A 75-amino-acid polypeptide reads, in one-letter code: Small ribosomal subunit protein bS18 (75 aa).

The protein belongs to the bacterial ribosomal protein bS18 family. Part of the 30S ribosomal subunit. Forms a tight heterodimer with protein bS6.

Functionally, binds as a heterodimer with protein bS6 to the central domain of the 16S rRNA, where it helps stabilize the platform of the 30S subunit. This chain is Small ribosomal subunit protein bS18, found in Mycoplasma capricolum subsp. capricolum (strain California kid / ATCC 27343 / NCTC 10154).